The chain runs to 307 residues: Aspartate carbamoyltransferase catalytic subunit (307 aa).

Carbamoyl phosphate is bound by residues Arg54 and Thr55. Residue Lys83 participates in L-aspartate binding. Residues Arg104, His132, and Gln135 each contribute to the carbamoyl phosphate site. The L-aspartate site is built by Arg165 and Arg228. Residues Leu267 and Pro268 each coordinate carbamoyl phosphate.

It belongs to the aspartate/ornithine carbamoyltransferase superfamily. ATCase family. As to quaternary structure, heterododecamer (2C3:3R2) of six catalytic PyrB chains organized as two trimers (C3), and six regulatory PyrI chains organized as three dimers (R2).

The catalysed reaction is carbamoyl phosphate + L-aspartate = N-carbamoyl-L-aspartate + phosphate + H(+). It participates in pyrimidine metabolism; UMP biosynthesis via de novo pathway; (S)-dihydroorotate from bicarbonate: step 2/3. Functionally, catalyzes the condensation of carbamoyl phosphate and aspartate to form carbamoyl aspartate and inorganic phosphate, the committed step in the de novo pyrimidine nucleotide biosynthesis pathway. The chain is Aspartate carbamoyltransferase catalytic subunit from Clostridium acetobutylicum (strain ATCC 824 / DSM 792 / JCM 1419 / IAM 19013 / LMG 5710 / NBRC 13948 / NRRL B-527 / VKM B-1787 / 2291 / W).